The following is a 223-amino-acid chain: Receptor-transporting protein 2 (223 aa).

Residues 1–193 (MSTSLTTCEW…KKGQAGFISS (193 aa)) lie on the Cytoplasmic side of the membrane. Residues 52-161 (ASGRFHCSWC…SEFCEACQEG (110 aa)) form a 3CxxC-type zinc finger. Residues 194–216 (FFSFRWCLFWGTLCLVIVYLQFF) form a helical membrane-spanning segment. The Extracellular segment spans residues 217 to 223 (RGRSGFL).

This sequence belongs to the TMEM7 family. In terms of assembly, interacts with olfactory receptors. Predominantly expressed in olfactory and vomeronasal organs, in mature olfactory sensory neurons.

Its subcellular location is the cell membrane. Functionally, specifically promotes functional cell surface expression of olfactory receptors, but not of other GPCRs. The chain is Receptor-transporting protein 2 (Rtp2) from Mus musculus (Mouse).